A 130-amino-acid polypeptide reads, in one-letter code: Phosphoribosyl-AMP cyclohydrolase (130 aa).

A Mg(2+)-binding site is contributed by Asp-77. Cys-78 contacts Zn(2+). Mg(2+)-binding residues include Asp-79 and Asp-81. Zn(2+)-binding residues include Cys-95 and Cys-102.

The protein belongs to the PRA-CH family. As to quaternary structure, homodimer. The cofactor is Mg(2+). Requires Zn(2+) as cofactor.

The protein resides in the cytoplasm. It catalyses the reaction 1-(5-phospho-beta-D-ribosyl)-5'-AMP + H2O = 1-(5-phospho-beta-D-ribosyl)-5-[(5-phospho-beta-D-ribosylamino)methylideneamino]imidazole-4-carboxamide. It participates in amino-acid biosynthesis; L-histidine biosynthesis; L-histidine from 5-phospho-alpha-D-ribose 1-diphosphate: step 3/9. Catalyzes the hydrolysis of the adenine ring of phosphoribosyl-AMP. This chain is Phosphoribosyl-AMP cyclohydrolase, found in Pseudomonas syringae pv. syringae (strain B728a).